The sequence spans 484 residues: Protein nucleotidyltransferase YdiU (484 aa).

ATP is bound by residues Gly87, Gly89, Arg90, Lys110, Asp122, Gly123, Arg173, and Arg180. Residue Asp249 is the Proton acceptor of the active site. Mg(2+)-binding residues include Asn250 and Asp259. Asp259 lines the ATP pocket.

Belongs to the SELO family. Requires Mg(2+) as cofactor. Mn(2+) serves as cofactor.

It catalyses the reaction L-seryl-[protein] + ATP = 3-O-(5'-adenylyl)-L-seryl-[protein] + diphosphate. The enzyme catalyses L-threonyl-[protein] + ATP = 3-O-(5'-adenylyl)-L-threonyl-[protein] + diphosphate. The catalysed reaction is L-tyrosyl-[protein] + ATP = O-(5'-adenylyl)-L-tyrosyl-[protein] + diphosphate. It carries out the reaction L-histidyl-[protein] + UTP = N(tele)-(5'-uridylyl)-L-histidyl-[protein] + diphosphate. It catalyses the reaction L-seryl-[protein] + UTP = O-(5'-uridylyl)-L-seryl-[protein] + diphosphate. The enzyme catalyses L-tyrosyl-[protein] + UTP = O-(5'-uridylyl)-L-tyrosyl-[protein] + diphosphate. In terms of biological role, nucleotidyltransferase involved in the post-translational modification of proteins. It can catalyze the addition of adenosine monophosphate (AMP) or uridine monophosphate (UMP) to a protein, resulting in modifications known as AMPylation and UMPylation. In Alcanivorax borkumensis (strain ATCC 700651 / DSM 11573 / NCIMB 13689 / SK2), this protein is Protein nucleotidyltransferase YdiU.